The sequence spans 442 residues: HTH-type transcriptional regulator NorG (442 aa).

The HTH gntR-type domain maps to 2–46 (KIPSQRQLAIQYNVNRVTIIKSIELLEAEGFIYTKVGSGTYVNDY). The segment at residues 6–25 (QRQLAIQYNVNRVTIIKSIE) is a DNA-binding region (H-T-H motif). The residue at position 288 (Lys-288) is an N6-(pyridoxal phosphate)lysine.

This sequence in the C-terminal section; belongs to the class-I pyridoxal-phosphate-dependent aminotransferase family. Pyridoxal 5'-phosphate is required as a cofactor.

Positively regulates the expression of the NorB efflux pump and negatively regulates the expression of the AbcA efflux pump. Binds specifically to the promoters of norA, norB and norC and abcA genes. Could also have an aminotransferase activity. The protein is HTH-type transcriptional regulator NorG (norG) of Staphylococcus aureus (strain bovine RF122 / ET3-1).